The primary structure comprises 241 residues: Putative inactive serine protease 58 (241 aa).

Positions 1-17 (MKLAFLCILSTLLRTFA) are cleaved as a signal peptide. The region spanning 18 to 239 (YNPDHIAGTT…YLPWIEDTMK (222 aa)) is the Peptidase S1 domain. A disulfide bridge connects residues Cys41 and Cys57. Active-site charge relay system residues include His56 and Asp101. Intrachain disulfides connect Cys133–Cys201, Cys165–Cys180, and Cys191–Cys215. N-linked (GlcNAc...) asparagine glycosylation is present at Asn156.

The protein belongs to the peptidase S1 family.

The protein resides in the secreted. It carries out the reaction Preferential cleavage: Arg-|-Xaa, Lys-|-Xaa.. The protein is Putative inactive serine protease 58 (Prss58) of Mus musculus (Mouse).